The sequence spans 81 residues: Cytochrome b559 subunit alpha (81 aa).

Residues 22 to 36 (VIHSITIPSLFIAGW) traverse the membrane as a helical segment. Histidine 24 is a binding site for heme.

This sequence belongs to the PsbE/PsbF family. In terms of assembly, heterodimer of an alpha subunit and a beta subunit. PSII is composed of 1 copy each of membrane proteins PsbA, PsbB, PsbC, PsbD, PsbE, PsbF, PsbH, PsbI, PsbJ, PsbK, PsbL, PsbM, PsbT, PsbX, PsbY, PsbZ, Psb30/Ycf12, at least 3 peripheral proteins of the oxygen-evolving complex and a large number of cofactors. It forms dimeric complexes. Heme b serves as cofactor.

It localises to the plastid. The protein resides in the chloroplast thylakoid membrane. Functionally, this b-type cytochrome is tightly associated with the reaction center of photosystem II (PSII). PSII is a light-driven water:plastoquinone oxidoreductase that uses light energy to abstract electrons from H(2)O, generating O(2) and a proton gradient subsequently used for ATP formation. It consists of a core antenna complex that captures photons, and an electron transfer chain that converts photonic excitation into a charge separation. The sequence is that of Cytochrome b559 subunit alpha from Cyanidioschyzon merolae (strain NIES-3377 / 10D) (Unicellular red alga).